A 255-amino-acid polypeptide reads, in one-letter code: Putative cysteine-rich repeat secretory protein 13 (255 aa).

The signal sequence occupies residues M1 to S21. 2 Gnk2-homologous domains span residues Y28–T136 and Y142–F252.

The protein belongs to the cysteine-rich repeat secretory protein family.

The protein localises to the secreted. This chain is Putative cysteine-rich repeat secretory protein 13 (CRRSP13), found in Arabidopsis thaliana (Mouse-ear cress).